Reading from the N-terminus, the 272-residue chain is Aquaporin FA-CHIP (272 aa).

Topologically, residues 1–17 (MASEFKKKAFWRAVIAE) are cytoplasmic. The chain crosses the membrane as a helical span at residues 18-35 (FLAMILFVFISIGAALGF). The Extracellular segment spans residues 36 to 52 (NFPIEEKANQTVGRSQD). Asparagine 44 is a glycosylation site (N-linked (GlcNAc...) asparagine). Residues 53–71 (IVKVSLAFGISIATMAQSV) traverse the membrane as a helical segment. Residues 72–97 (GHVSGAHLNPAVTLGCLLSCQISILK) lie on the Cytoplasmic side of the membrane. The short motif at 80–82 (NPA) is the NPA 1 element. The helical transmembrane segment at 98–119 (AVMYIIAQCLGAVVATAILSGI) threads the bilayer. Over 120-139 (TSGLENNSLGLNGLSPGVSA) the chain is Extracellular. The N-linked (GlcNAc...) asparagine glycan is linked to asparagine 125. Residues 140–160 (GQGLGVEILVTFQLVLCVVAV) form a helical membrane-spanning segment. Over 161-168 (TDRRRHDV) the chain is Cytoplasmic. A helical transmembrane segment spans residues 169–188 (SGSVPLAIGLSVALGHLIAI). Over 189–214 (DYTGCGMNPARSFGSAVLTKNFTYHW) the chain is Extracellular. An NPA 2 motif is present at residues 196–198 (NPA). Residue asparagine 209 is glycosylated (N-linked (GlcNAc...) asparagine). A helical transmembrane segment spans residues 215 to 236 (IFWVGPMIGGAAAAIIYDFILA). Over 237 to 272 (PRTSDLTDRMKVWTNGQVEEYELDGDDNTRVEMKPK) the chain is Cytoplasmic.

This sequence belongs to the MIP/aquaporin (TC 1.A.8) family.

It localises to the membrane. In terms of biological role, forms a water-specific channel. This Pelophylax lessonae (Pool frog) protein is Aquaporin FA-CHIP (AQPA).